The sequence spans 277 residues: Undecaprenyl-diphosphatase (277 aa).

The next 6 membrane-spanning stretches (helical) occupy residues 44–64 (RAMA…VWEF), 86–106 (GNLL…ADLI), 110–130 (LFNP…MLWA), 184–204 (AATE…AVYS), 215–235 (GDLP…MIAV), and 250–270 (FAWY…FGWV).

Belongs to the UppP family.

It localises to the cell inner membrane. The catalysed reaction is di-trans,octa-cis-undecaprenyl diphosphate + H2O = di-trans,octa-cis-undecaprenyl phosphate + phosphate + H(+). Catalyzes the dephosphorylation of undecaprenyl diphosphate (UPP). Confers resistance to bacitracin. The sequence is that of Undecaprenyl-diphosphatase from Pseudomonas putida (strain ATCC 47054 / DSM 6125 / CFBP 8728 / NCIMB 11950 / KT2440).